The following is a 210-amino-acid chain: Placenta-expressed transcript 1 protein (210 aa).

The first 26 residues, 1–26, serve as a signal peptide directing secretion; it reads MAVLGSPLLPLRLFLCFGLLFFSASC. At 27-189 the chain is on the extracellular side; the sequence is TDHPDQCMIF…THKNSANRVF (163 aa). N-linked (GlcNAc...) asparagine glycosylation is found at Asn-67 and Asn-94. Residues 190 to 209 form a helical membrane-spanning segment; that stretch reads RSPVRDAIQILLAFLTSKLL. A topological domain (cytoplasmic) is located at residue Phe-210.

As to expression, highly expressed in placenta.

The protein localises to the membrane. It is found in the apical cell membrane. In terms of biological role, modulates leading keratinocyte migration and cellular adhesion to matrix proteins during a wound-healing response and promotes wound repair. May play a role during trichilemmal differentiation of the hair follicle. This chain is Placenta-expressed transcript 1 protein (PLET1), found in Sus scrofa (Pig).